Here is a 206-residue protein sequence, read N- to C-terminus: Small ribosomal subunit protein eS8 (206 aa).

A disordered region spans residues 1 to 37 (MGISRDSRHKRSATGAKRAQFRKKRKFELGRQPANTK).

This sequence belongs to the eukaryotic ribosomal protein eS8 family. Component of the small ribosomal subunit. Mature ribosomes consist of a small (40S) and a large (60S) subunit. The 40S subunit contains about 32 different proteins and 1 molecule of RNA (18S). The 60S subunit contains 45 different proteins and 3 molecules of RNA (25S, 5.8S and 5S).

The protein resides in the cytoplasm. Component of the ribosome, a large ribonucleoprotein complex responsible for the synthesis of proteins in the cell. The small ribosomal subunit (SSU) binds messenger RNAs (mRNAs) and translates the encoded message by selecting cognate aminoacyl-transfer RNA (tRNA) molecules. The large subunit (LSU) contains the ribosomal catalytic site termed the peptidyl transferase center (PTC), which catalyzes the formation of peptide bonds, thereby polymerizing the amino acids delivered by tRNAs into a polypeptide chain. The nascent polypeptides leave the ribosome through a tunnel in the LSU and interact with protein factors that function in enzymatic processing, targeting, and the membrane insertion of nascent chains at the exit of the ribosomal tunnel. The polypeptide is Small ribosomal subunit protein eS8 (RPS8A) (Candida albicans (strain SC5314 / ATCC MYA-2876) (Yeast)).